The sequence spans 201 residues: 3-isopropylmalate dehydratase small subunit (201 aa).

This sequence belongs to the LeuD family. LeuD type 1 subfamily. In terms of assembly, heterodimer of LeuC and LeuD.

It carries out the reaction (2R,3S)-3-isopropylmalate = (2S)-2-isopropylmalate. The protein operates within amino-acid biosynthesis; L-leucine biosynthesis; L-leucine from 3-methyl-2-oxobutanoate: step 2/4. Functionally, catalyzes the isomerization between 2-isopropylmalate and 3-isopropylmalate, via the formation of 2-isopropylmaleate. The chain is 3-isopropylmalate dehydratase small subunit from Sinorhizobium fredii (strain NBRC 101917 / NGR234).